The following is a 148-amino-acid chain: MTWAIVMLILMSLVKIVLTCLPTGVIEWLLGKFEVHAKLSDENASLSLDGKRLEGAEKQKVIDQFNEAIFLEKYYIYPGDEERYLHPENGGTPLVIDTKKGKKDVKLFVYRYDDHIDVVKQYKKKVIAYRVLSESLQKESLSVAGSLA.

Residues 7 to 29 (MLILMSLVKIVLTCLPTGVIEWL) traverse the membrane as a helical segment.

It is found in the membrane. This is an uncharacterized protein from Bacillus subtilis (strain 168).